The sequence spans 268 residues: DNA ligase (268 aa).

Residue Lys-41 is the N6-AMP-lysine intermediate of the active site. Residues Phe-111, Arg-181, and Lys-187 each contribute to the ATP site.

The protein belongs to the ATP-dependent DNA ligase family. Requires a divalent metal cation as cofactor.

It carries out the reaction ATP + (deoxyribonucleotide)n-3'-hydroxyl + 5'-phospho-(deoxyribonucleotide)m = (deoxyribonucleotide)n+m + AMP + diphosphate.. In terms of biological role, catalyzes efficient strand joining on a single nicked DNA. The protein is DNA ligase (ligA) of Haemophilus influenzae (strain ATCC 51907 / DSM 11121 / KW20 / Rd).